The primary structure comprises 116 residues: Large ribosomal subunit protein bL21c (116 aa).

The protein belongs to the bacterial ribosomal protein bL21 family. Part of the 50S ribosomal subunit.

It is found in the plastid. It localises to the chloroplast. Its function is as follows. This protein binds to 23S rRNA. The chain is Large ribosomal subunit protein bL21c from Marchantia polymorpha (Common liverwort).